The chain runs to 76 residues: Small ribosomal subunit protein bS18 (76 aa).

The protein belongs to the bacterial ribosomal protein bS18 family. In terms of assembly, part of the 30S ribosomal subunit. Forms a tight heterodimer with protein bS6.

Binds as a heterodimer with protein bS6 to the central domain of the 16S rRNA, where it helps stabilize the platform of the 30S subunit. The chain is Small ribosomal subunit protein bS18 from Xylella fastidiosa (strain 9a5c).